Here is a 780-residue protein sequence, read N- to C-terminus: APC membrane recruitment protein 3 (780 aa).

A compositionally biased stretch (basic and acidic residues) spans lysine 20–lysine 32. Disordered regions lie at residues lysine 20–glycine 59, glutamate 341–aspartate 407, lysine 547–glycine 569, glycine 582–serine 617, lysine 635–leucine 659, lysine 706–aspartate 729, and leucine 749–serine 780. A compositionally biased stretch (polar residues) spans serine 354–aspartate 376. Positions glutamine 602 to serine 617 are enriched in polar residues. Polar residues predominate over residues alanine 753–glutamine 763.

This sequence belongs to the Amer family.

It localises to the cell membrane. Functionally, regulator of the canonical Wnt signaling pathway. Acts by specifically binding phosphatidylinositol 4,5-bisphosphate (PtdIns(4,5)P2), translocating to the cell membrane. The protein is APC membrane recruitment protein 3 (Amer3) of Mus musculus (Mouse).